The sequence spans 234 residues: Sugar fermentation stimulation protein homolog (234 aa).

It belongs to the SfsA family.

The protein is Sugar fermentation stimulation protein homolog of Shewanella baltica (strain OS195).